The primary structure comprises 142 residues: Large ribosomal subunit protein uL13 (142 aa).

It belongs to the universal ribosomal protein uL13 family. Part of the 50S ribosomal subunit.

In terms of biological role, this protein is one of the early assembly proteins of the 50S ribosomal subunit, although it is not seen to bind rRNA by itself. It is important during the early stages of 50S assembly. The protein is Large ribosomal subunit protein uL13 of Histophilus somni (Haemophilus somnus).